The following is an 825-amino-acid chain: Putative pentatricopeptide repeat-containing protein At2g01510 (825 aa).

17 PPR repeats span residues 47–77 (DTCRSNFIVEDLLRRGQVSAARKVYDEMPHK), 78–108 (NTVSTNTMISGHVKTGDVSSARDLFDAMPDR), 109–143 (TVVTWTILMGWYARNSHFDEAFKLFRQMCRSSSCT), 146–180 (DHVTFTTLLPGCNDAVPQNAVGQVHAFAVKLGFDT), 183–213 (FLTVSNVLLKSYCEVRRLDLACVLFEEIPEK), 214–248 (DSVTFNTLITGYEKDGLYTESIHLFLKMRQSGHQP), 249–283 (SDFTFSGVLKAVVGLHDFALGQQLHALSVTTGFSR), 284–314 (DASVGNQILDFYSKHDRVLETRMLFDEMPEL), 315–349 (DFVSYNVVISSYSQADQYEASLHFFREMQCMGFDR), 350–384 (RNFPFATMLSIAANLSSLQMGRQLHCQALLATADS), 385–415 (ILHVGNSLVDMYAKCEMFEEAELIFKSLPQR), 416–450 (TTVSWTALISGYVQKGLHGAGLKLFTKMRGSNLRA), 451–485 (DQSTFATVLKASASFASLLLGKQLHAFIIRSGNLE), 486–516 (NVFSGSGLVDMYAKCGSIKDAVQVFEEMPDR), 517–551 (NAVSWNALISAHADNGDGEAAIGAFAKMIESGLQP), 552–587 (DSVSILGVLTACSHCGFVEQGTEYFQAMSPIYGITP), and 588–618 (KKKHYACMLDLLGRNGRFAEAEKLMDEMPFE). Residues 623 to 699 (MWSSVLNACR…VPAYSWVEVN (77 aa)) form a type E motif region. The tract at residues 700-730 (HKIHVFSSNDQTHPNGDEIVRKINELTAEIE) is type E(+) motif. Residues 731–825 (REGYKPDTSS…EGVCSCGDYW (95 aa)) are type DYW motif.

This sequence belongs to the PPR family. PCMP-H subfamily.

The sequence is that of Putative pentatricopeptide repeat-containing protein At2g01510 (PCMP-H36) from Arabidopsis thaliana (Mouse-ear cress).